The chain runs to 70 residues: Large ribosomal subunit protein uL29 (70 aa).

Belongs to the universal ribosomal protein uL29 family.

This chain is Large ribosomal subunit protein uL29, found in Gloeobacter violaceus (strain ATCC 29082 / PCC 7421).